The sequence spans 283 residues: Probable endonuclease 4 (283 aa).

Zn(2+) is bound by residues His69, His109, Glu145, Asp179, His182, His216, Asp229, His231, and Glu261.

Belongs to the AP endonuclease 2 family. Zn(2+) serves as cofactor.

It carries out the reaction Endonucleolytic cleavage to 5'-phosphooligonucleotide end-products.. Endonuclease IV plays a role in DNA repair. It cleaves phosphodiester bonds at apurinic or apyrimidinic (AP) sites, generating a 3'-hydroxyl group and a 5'-terminal sugar phosphate. The protein is Probable endonuclease 4 of Desulfosudis oleivorans (strain DSM 6200 / JCM 39069 / Hxd3) (Desulfococcus oleovorans).